The sequence spans 117 residues: Non-specific lipid-transfer protein (117 aa).

A signal peptide spans 1–26; sequence MACSAMTKLALVVALCMVVSVPIAQA. Intrachain disulfides connect Cys-29/Cys-76, Cys-39/Cys-53, Cys-54/Cys-99, and Cys-74/Cys-113.

This sequence belongs to the plant LTP family.

Plant non-specific lipid-transfer proteins transfer phospholipids as well as galactolipids across membranes. May play a role in wax or cutin deposition in the cell walls of expanding epidermal cells and certain secretory tissues. The protein is Non-specific lipid-transfer protein of Prunus avium (Cherry).